We begin with the raw amino-acid sequence, 1015 residues long: Putative calcium-transporting ATPase 7, plasma membrane-type (1015 aa).

Met1 is modified (N-acetylmethionine). Over 1–161 the chain is Cytoplasmic; sequence MESYLNSNFD…NKFAESELRS (161 aa). Residues 20 to 31 form an interaction with calmodulin region; it reads VLEKWRNLCSVV. Ser45 carries the post-translational modification Phosphoserine; by CPK. The chain crosses the membrane as a helical span at residues 162–182; sequence FWVFVWEALQDMTLMILGVCA. Topologically, residues 183-200 are lumenal; sequence FVSLIVGIATEGWPQGSH. Residues 201-221 traverse the membrane as a helical segment; the sequence is DGLGIVASILLVVFVTATSDY. The Cytoplasmic portion of the chain corresponds to 222–349; sequence RQSLQFRDLD…DDETPLQVKL (128 aa). The helical transmembrane segment at 350 to 369 threads the bilayer; that stretch reads NGVATIIGKIGLSFAIVTFA. Topologically, residues 370-399 are lumenal; it reads VLVQGMFMRKLSLGPHWWWSGDDALELLEY. Residues 400 to 417 traverse the membrane as a helical segment; sequence FAIAVTIVVVAVPEGLPL. Residues 418–811 lie on the Cytoplasmic side of the membrane; sequence AVTLSLAFAM…KWGRSVYINI (394 aa). The active-site 4-aspartylphosphate intermediate is Asp455. Asp756 and Asp760 together coordinate Mg(2+). The chain crosses the membrane as a helical span at residues 812 to 830; it reads QKFVQFQLTVNVVALIVNF. Topologically, residues 831–841 are lumenal; the sequence is SSACLTGSAPL. Residues 842–862 traverse the membrane as a helical segment; sequence TAVQLLWVNMIMDTLGALALA. Residues 863–882 lie on the Cytoplasmic side of the membrane; it reads TEPPNNELMKRMPVGRRGNF. Residues 883–905 traverse the membrane as a helical segment; it reads ITNAMWRNILGQAVYQFIIIWIL. The Lumenal segment spans residues 906-917; it reads QAKGKSMFGLVG. Residues 918–939 traverse the membrane as a helical segment; that stretch reads SDSTLVLNTLIFNCFVFCQVFN. Topologically, residues 940 to 957 are cytoplasmic; it reads EVSSREMEEIDVFKGILD. A helical membrane pass occupies residues 958-979; it reads NYVFVVVIGATVFFQIIIIEFL. The Lumenal segment spans residues 980 to 989; sequence GTFASTTPLT. Residues 990–1011 traverse the membrane as a helical segment; that stretch reads IVQWFFSIFVGFLGMPIAAGLK. The Cytoplasmic segment spans residues 1012–1015; it reads KIPV.

This sequence belongs to the cation transport ATPase (P-type) (TC 3.A.3) family. Type IIB subfamily.

The protein resides in the membrane. It carries out the reaction Ca(2+)(in) + ATP + H2O = Ca(2+)(out) + ADP + phosphate + H(+). With respect to regulation, activated by calmodulin. Functionally, this magnesium-dependent enzyme catalyzes the hydrolysis of ATP coupled with the translocation of calcium from the cytosol out of the cell or into organelles. The sequence is that of Putative calcium-transporting ATPase 7, plasma membrane-type (ACA7) from Arabidopsis thaliana (Mouse-ear cress).